The primary structure comprises 230 residues: Cytochrome c oxidase subunit 2 (230 aa).

At 1-29 (NNFFQGYNLLFQHSLFASYMDWFHAFNCS) the chain is on the mitochondrial intermembrane side. Residues 30–50 (LLLGVLVFVTLLFGYLIFSTF) form a helical membrane-spanning segment. Residues 51 to 63 (YFKSKKIEYQFGE) lie on the Mitochondrial matrix side of the membrane. A helical transmembrane segment spans residues 64-84 (LLCSIFPTIILLMQMVPSLSL). Topologically, residues 85–230 (LYYYGLMNLD…FKSWCFGTME (146 aa)) are mitochondrial intermembrane. Positions 163, 198, 200, 202, 206, and 209 each coordinate Cu cation. Glutamate 200 serves as a coordination point for Mg(2+).

Belongs to the cytochrome c oxidase subunit 2 family. Component of the cytochrome c oxidase (complex IV, CIV), a multisubunit enzyme composed of a catalytic core of 3 subunits and several supernumerary subunits. The complex exists as a monomer or a dimer and forms supercomplexes (SCs) in the inner mitochondrial membrane with ubiquinol-cytochrome c oxidoreductase (cytochrome b-c1 complex, complex III, CIII). It depends on Cu cation as a cofactor.

It is found in the mitochondrion inner membrane. The enzyme catalyses 4 Fe(II)-[cytochrome c] + O2 + 8 H(+)(in) = 4 Fe(III)-[cytochrome c] + 2 H2O + 4 H(+)(out). Functionally, component of the cytochrome c oxidase, the last enzyme in the mitochondrial electron transport chain which drives oxidative phosphorylation. The respiratory chain contains 3 multisubunit complexes succinate dehydrogenase (complex II, CII), ubiquinol-cytochrome c oxidoreductase (cytochrome b-c1 complex, complex III, CIII) and cytochrome c oxidase (complex IV, CIV), that cooperate to transfer electrons derived from NADH and succinate to molecular oxygen, creating an electrochemical gradient over the inner membrane that drives transmembrane transport and the ATP synthase. Cytochrome c oxidase is the component of the respiratory chain that catalyzes the reduction of oxygen to water. Electrons originating from reduced cytochrome c in the intermembrane space (IMS) are transferred via the dinuclear copper A center (CU(A)) of subunit 2 and heme A of subunit 1 to the active site in subunit 1, a binuclear center (BNC) formed by heme A3 and copper B (CU(B)). The BNC reduces molecular oxygen to 2 water molecules using 4 electrons from cytochrome c in the IMS and 4 protons from the mitochondrial matrix. This Caenorhabditis remanei (Caenorhabditis vulgaris) protein is Cytochrome c oxidase subunit 2 (cox-2).